The primary structure comprises 131 residues: Large ribosomal subunit protein bL21 (131 aa).

Residues 106–116 show a composition bias toward basic and acidic residues; that stretch reads TIDDMPKKEAA. Positions 106 to 131 are disordered; the sequence is TIDDMPKKEAAPAKARRSTKKAAAAE.

The protein belongs to the bacterial ribosomal protein bL21 family. Part of the 50S ribosomal subunit. Contacts protein L20.

Its function is as follows. This protein binds to 23S rRNA in the presence of protein L20. This is Large ribosomal subunit protein bL21 from Koribacter versatilis (strain Ellin345).